The chain runs to 279 residues: NAD kinase (279 aa).

The active-site Proton acceptor is D61. NAD(+) is bound by residues 61–62, 138–139, K149, K166, D168, and 179–184; these read DG, ND, and TGYSFS.

It belongs to the NAD kinase family. Requires a divalent metal cation as cofactor.

It localises to the cytoplasm. The enzyme catalyses NAD(+) + ATP = ADP + NADP(+) + H(+). In terms of biological role, involved in the regulation of the intracellular balance of NAD and NADP, and is a key enzyme in the biosynthesis of NADP. Catalyzes specifically the phosphorylation on 2'-hydroxyl of the adenosine moiety of NAD to yield NADP. In Borreliella burgdorferi (strain ATCC 35210 / DSM 4680 / CIP 102532 / B31) (Borrelia burgdorferi), this protein is NAD kinase.